Consider the following 239-residue polypeptide: MLIIAGLGNPGSKYAGNRHNIGFMAVDAIWQRQGFSSWSKKFKAEIAEGEIAGERVLLIKPQTFMNLSGEAVGEAMRFYKLAPKDIVVIYDELDLIAGKARIKIGGGHGGHNGIKSIDAHCGKEYRRLRLGIGHPGVKDLVHAHVLGDFAKADQAWLSSLLDTIADNAGMLVKGEDSQLMNKIALATGGKPDAEEPQAPKKQVGQSHIHKARNAAQPKKLPATGPMADMLKKMFGSKGD.

Tyrosine 14 is a tRNA binding site. Histidine 19 acts as the Proton acceptor in catalysis. Phenylalanine 64, asparagine 66, and asparagine 112 together coordinate tRNA. The disordered stretch occupies residues 188–225 (GGKPDAEEPQAPKKQVGQSHIHKARNAAQPKKLPATGP).

It belongs to the PTH family. In terms of assembly, monomer.

The protein localises to the cytoplasm. The catalysed reaction is an N-acyl-L-alpha-aminoacyl-tRNA + H2O = an N-acyl-L-amino acid + a tRNA + H(+). Its function is as follows. Hydrolyzes ribosome-free peptidyl-tRNAs (with 1 or more amino acids incorporated), which drop off the ribosome during protein synthesis, or as a result of ribosome stalling. In terms of biological role, catalyzes the release of premature peptidyl moieties from peptidyl-tRNA molecules trapped in stalled 50S ribosomal subunits, and thus maintains levels of free tRNAs and 50S ribosomes. The protein is Peptidyl-tRNA hydrolase of Sinorhizobium fredii (strain NBRC 101917 / NGR234).